A 144-amino-acid chain; its full sequence is Large ribosomal subunit protein uL11 (144 aa).

Belongs to the universal ribosomal protein uL11 family. As to quaternary structure, part of the ribosomal stalk of the 50S ribosomal subunit. Interacts with L10 and the large rRNA to form the base of the stalk. L10 forms an elongated spine to which L12 dimers bind in a sequential fashion forming a multimeric L10(L12)X complex. One or more lysine residues are methylated.

Forms part of the ribosomal stalk which helps the ribosome interact with GTP-bound translation factors. The chain is Large ribosomal subunit protein uL11 from Frankia alni (strain DSM 45986 / CECT 9034 / ACN14a).